Reading from the N-terminus, the 74-residue chain is Omega-conotoxin-like PuIIA (74 aa).

The signal sequence occupies residues 1 to 22 (MKLTCVVIVAVLFLTACQLITA). A propeptide spanning residues 23 to 46 (ETYSRGEQKHRALSSTDKNSKLTR) is cleaved from the precursor. 3 disulfides stabilise this stretch: cysteine 48-cysteine 62, cysteine 55-cysteine 66, and cysteine 61-cysteine 73.

It belongs to the conotoxin O1 superfamily. In terms of tissue distribution, expressed by the venom duct.

It localises to the secreted. Functionally, omega-conotoxins act at presynaptic membranes, they bind and block voltage-gated calcium channels (Cav). This chain is Omega-conotoxin-like PuIIA, found in Conus pulicarius (Flea-bitten cone).